Reading from the N-terminus, the 249-residue chain is Enolase-phosphatase E1 (249 aa).

The protein belongs to the HAD-like hydrolase superfamily. MasA/MtnC family. As to quaternary structure, monomer. Mg(2+) is required as a cofactor.

It catalyses the reaction 5-methylsulfanyl-2,3-dioxopentyl phosphate + H2O = 1,2-dihydroxy-5-(methylsulfanyl)pent-1-en-3-one + phosphate. The protein operates within amino-acid biosynthesis; L-methionine biosynthesis via salvage pathway; L-methionine from S-methyl-5-thio-alpha-D-ribose 1-phosphate: step 3/6. Its pathway is amino-acid biosynthesis; L-methionine biosynthesis via salvage pathway; L-methionine from S-methyl-5-thio-alpha-D-ribose 1-phosphate: step 4/6. In terms of biological role, bifunctional enzyme that catalyzes the enolization of 2,3-diketo-5-methylthiopentyl-1-phosphate (DK-MTP-1-P) into the intermediate 2-hydroxy-3-keto-5-methylthiopentenyl-1-phosphate (HK-MTPenyl-1-P), which is then dephosphorylated to form the acireductone 1,2-dihydroxy-3-keto-5-methylthiopentene (DHK-MTPene). The protein is Enolase-phosphatase E1 of Pseudomonas aeruginosa (strain ATCC 15692 / DSM 22644 / CIP 104116 / JCM 14847 / LMG 12228 / 1C / PRS 101 / PAO1).